A 204-amino-acid chain; its full sequence is Holliday junction branch migration complex subunit RuvA (204 aa).

The interval 1-64 is domain I; that stretch reads MIGRLRGIIL…EDAQLLFGFN (64 aa). The domain II stretch occupies residues 65-143; the sequence is SKPERALFRE…GMHGDLFASD (79 aa). The tract at residues 144–155 is flexible linker; it reads APFALTSEMPKE. The tract at residues 156 to 204 is domain III; that stretch reads TANDAEGEAVAALTALGYKPQEASRMIVKVGKPDADCETLIREALRAAI.

It belongs to the RuvA family. In terms of assembly, homotetramer. Forms an RuvA(8)-RuvB(12)-Holliday junction (HJ) complex. HJ DNA is sandwiched between 2 RuvA tetramers; dsDNA enters through RuvA and exits via RuvB. An RuvB hexamer assembles on each DNA strand where it exits the tetramer. Each RuvB hexamer is contacted by two RuvA subunits (via domain III) on 2 adjacent RuvB subunits; this complex drives branch migration. In the full resolvosome a probable DNA-RuvA(4)-RuvB(12)-RuvC(2) complex forms which resolves the HJ.

Its subcellular location is the cytoplasm. In terms of biological role, the RuvA-RuvB-RuvC complex processes Holliday junction (HJ) DNA during genetic recombination and DNA repair, while the RuvA-RuvB complex plays an important role in the rescue of blocked DNA replication forks via replication fork reversal (RFR). RuvA specifically binds to HJ cruciform DNA, conferring on it an open structure. The RuvB hexamer acts as an ATP-dependent pump, pulling dsDNA into and through the RuvAB complex. HJ branch migration allows RuvC to scan DNA until it finds its consensus sequence, where it cleaves and resolves the cruciform DNA. The protein is Holliday junction branch migration complex subunit RuvA of Erwinia tasmaniensis (strain DSM 17950 / CFBP 7177 / CIP 109463 / NCPPB 4357 / Et1/99).